A 249-amino-acid polypeptide reads, in one-letter code: tRNA pseudouridine synthase A (249 aa).

Asp-52 (nucleophile) is an active-site residue. Tyr-110 contacts substrate.

This sequence belongs to the tRNA pseudouridine synthase TruA family. Homodimer.

The catalysed reaction is uridine(38/39/40) in tRNA = pseudouridine(38/39/40) in tRNA. Its function is as follows. Formation of pseudouridine at positions 38, 39 and 40 in the anticodon stem and loop of transfer RNAs. The sequence is that of tRNA pseudouridine synthase A from Azobacteroides pseudotrichonymphae genomovar. CFP2.